The sequence spans 452 residues: MFKSIMYALAVAPAVTSSSDKLPNGVVSASQLGSEKEKRKLKNVTKIVIVGGGAGGLSVASQLEHKFKNKGDIVIVEPSEKHYYQPLWTLVGGGIFSRKDSEKDEKDFIPKGATWVKDSVTVFKPEENIVLTKDGKEIDYDYLVVSTGLELYWDRVKGLKENLGKNGVTSNYSYDSCEKTFEFIKSLKPGNVAIFTVPTTGVKCGGAPQKILWLCDDYLRKHGIRDKVRLDFNSAGASMFPVKKYSEVLDKMAKERGVNQNFAHNLVEIKGDSKEAVFETPQGNKTVKYDMIHVVPPMGPHSVIKNSPLADPATGFVNVDKGTLQHVKYDNVFSLGDTSNLPTSKTAAAITSQAPILVGNLINHKLGLPLNHKYDGYTSCPITTSYSKIILAEFKYGFEVDESLPFDQSKESYFPMFLKKYVFPTAYWEGMLKGRWFGKNTLFNPIKTPEIN.

FAD contacts are provided by residues 54 to 55 (AG), glutamate 77, glutamine 85, and valine 120. The Cysteine persulfide intermediate role is filled by cysteine 204. A disulfide bond links cysteine 204 and cysteine 380. FAD contacts are provided by residues aspartate 337 and 345–348 (KTAA). The active-site Cysteine persulfide intermediate is cysteine 380.

Belongs to the SQRD family. It depends on FAD as a cofactor.

It localises to the mitochondrion. The enzyme catalyses ubiquinone-10 + hydrogen sulfide + sulfite + 2 H(+) = ubiquinol-10 + thiosulfate. It carries out the reaction a quinone + hydrogen sulfide + glutathione + H(+) = S-sulfanylglutathione + a quinol. In terms of biological role, catalyzes the oxidation of hydrogen sulfide, with the help of a quinone. The protein is Sulfide:quinone oxidoreductase, mitochondrial of Dictyostelium discoideum (Social amoeba).